Here is a 98-residue protein sequence, read N- to C-terminus: MAKSAYQILRKPVITEKGLGVKETESTLVFEVSANATKTEIKEAVQKTFKVKVDTVRTANFVGKERRRGKFSGYRPDWKKAYVRLKTGEKMPEYAENL.

The protein belongs to the universal ribosomal protein uL23 family. In terms of assembly, part of the 50S ribosomal subunit. Contacts protein L29, and trigger factor when it is bound to the ribosome.

Its function is as follows. One of the early assembly proteins it binds 23S rRNA. One of the proteins that surrounds the polypeptide exit tunnel on the outside of the ribosome. Forms the main docking site for trigger factor binding to the ribosome. This is Large ribosomal subunit protein uL23 from Koribacter versatilis (strain Ellin345).